Consider the following 125-residue polypeptide: MQFQGRSRRKYTGAKLKSARGKRKFELGREPAATHVNDTKRKNVPTHGGNRKVRLLQENIANVTNPADGKTIVSAIETVVDNAANAHYVRRNIITKGSVIQTAAGNARVTSRPGQDGVVNAILIE.

Over residues 1–23 (MQFQGRSRRKYTGAKLKSARGKR) the composition is skewed to basic residues. Residues 1–34 (MQFQGRSRRKYTGAKLKSARGKRKFELGREPAAT) are disordered.

The protein belongs to the eukaryotic ribosomal protein eS8 family. Part of the 30S ribosomal subunit.

The protein is Small ribosomal subunit protein eS8 of Methanococcoides burtonii (strain DSM 6242 / NBRC 107633 / OCM 468 / ACE-M).